Reading from the N-terminus, the 964-residue chain is Vitamin B12-dependent ribonucleotide reductase (964 aa).

A disordered region spans residues 1 to 21 (MTETASGPARGSRAKGTKAKG). A compositionally biased stretch (basic residues) spans 12–21 (SRAKGTKAKG). Residues Ser-142, 158–159 (AC), Gly-187, 363–367 (NPCSE), and 553–557 (PTGTI) each bind substrate. Cys-159 and Cys-376 form a disulfide bridge. Asn-363 (proton acceptor) is an active-site residue. The active-site Cysteine radical intermediate is Cys-365. The Proton acceptor role is filled by Glu-367.

It belongs to the ribonucleoside diphosphate reductase class-2 family. Adenosylcob(III)alamin is required as a cofactor.

The catalysed reaction is a 2'-deoxyribonucleoside 5'-diphosphate + [thioredoxin]-disulfide + H2O = a ribonucleoside 5'-diphosphate + [thioredoxin]-dithiol. Catalyzes the reduction of ribonucleotides to deoxyribonucleotides. May function to provide a pool of deoxyribonucleotide precursors for DNA repair during oxygen limitation and/or for immediate growth after restoration of oxygen. This Streptomyces avermitilis (strain ATCC 31267 / DSM 46492 / JCM 5070 / NBRC 14893 / NCIMB 12804 / NRRL 8165 / MA-4680) protein is Vitamin B12-dependent ribonucleotide reductase (nrdJ).